We begin with the raw amino-acid sequence, 252 residues long: uncharacterized protein (252 aa).

The first 25 residues, 1-25 (MRKKKFLSRFAFGSLFLLCGTILSA), serve as a signal peptide directing secretion. Residue Cys26 is the site of N-palmitoyl cysteine attachment. Cys26 carries S-diacylglycerol cysteine lipidation.

This sequence belongs to the MG439/MG440 family.

Its subcellular location is the cell membrane. This is an uncharacterized protein from Mycoplasma pneumoniae (strain ATCC 29342 / M129 / Subtype 1) (Mycoplasmoides pneumoniae).